An 84-amino-acid chain; its full sequence is Large ribosomal subunit protein bL27 (84 aa).

Residues 1–21 (MAHKKGGGSTKNGRDSNPKYL) are disordered.

This sequence belongs to the bacterial ribosomal protein bL27 family.

This Chlorobaculum parvum (strain DSM 263 / NCIMB 8327) (Chlorobium vibrioforme subsp. thiosulfatophilum) protein is Large ribosomal subunit protein bL27.